The chain runs to 278 residues: TATA box-binding protein-associated factor RNA polymerase I subunit D (278 aa).

2 disordered regions span residues 20 to 71 (ANRS…SSFE) and 88 to 116 (KKRY…RNPI). Polar residues predominate over residues 22 to 33 (RSDNSSDSSLFK). At S23 the chain carries Phosphoserine. Residues 88-99 (KKRYKKKKKRRY) are compositionally biased toward basic residues. A phosphoserine mark is found at S138 and S234.

As to quaternary structure, component of the transcription factor SL1/TIF-IB complex, composed of TBP and at least TAF1A, TAF1B, TAF1C and TAF1D. Interacts with UBTF.

It is found in the nucleus. Functionally, component of the transcription factor SL1/TIF-IB complex, which is involved in the assembly of the PIC (preinitiation complex) during RNA polymerase I-dependent transcription. The rate of PIC formation probably is primarily dependent on the rate of association of SL1/TIF-IB with the rDNA promoter. SL1/TIF-IB is involved in stabilization of nucleolar transcription factor 1/UBTF on rDNA. Formation of SL1/TIF-IB excludes the association of TBP with TFIID subunits. This Homo sapiens (Human) protein is TATA box-binding protein-associated factor RNA polymerase I subunit D (TAF1D).